Here is a 505-residue protein sequence, read N- to C-terminus: Protein nucleotidyltransferase YdiU (505 aa).

8 residues coordinate ATP: G102, G104, R105, K125, D137, G138, R188, and R195. Residue D264 is the Proton acceptor of the active site. The Mg(2+) site is built by N265 and D274. Residue D274 participates in ATP binding. Residues 485–505 (FADYGKPPAPGEEVQQTFCGT) are disordered.

The protein belongs to the SELO family. Requires Mg(2+) as cofactor. Mn(2+) serves as cofactor.

The catalysed reaction is L-seryl-[protein] + ATP = 3-O-(5'-adenylyl)-L-seryl-[protein] + diphosphate. It carries out the reaction L-threonyl-[protein] + ATP = 3-O-(5'-adenylyl)-L-threonyl-[protein] + diphosphate. It catalyses the reaction L-tyrosyl-[protein] + ATP = O-(5'-adenylyl)-L-tyrosyl-[protein] + diphosphate. The enzyme catalyses L-histidyl-[protein] + UTP = N(tele)-(5'-uridylyl)-L-histidyl-[protein] + diphosphate. The catalysed reaction is L-seryl-[protein] + UTP = O-(5'-uridylyl)-L-seryl-[protein] + diphosphate. It carries out the reaction L-tyrosyl-[protein] + UTP = O-(5'-uridylyl)-L-tyrosyl-[protein] + diphosphate. Its function is as follows. Nucleotidyltransferase involved in the post-translational modification of proteins. It can catalyze the addition of adenosine monophosphate (AMP) or uridine monophosphate (UMP) to a protein, resulting in modifications known as AMPylation and UMPylation. This chain is Protein nucleotidyltransferase YdiU, found in Nitrobacter hamburgensis (strain DSM 10229 / NCIMB 13809 / X14).